A 519-amino-acid polypeptide reads, in one-letter code: Circadian clock oscillator protein KaiC 1 (519 aa).

2 consecutive KaiC domains span residues 1 to 248 (MNLP…INIF) and 262 to 519 (ARIS…KTAE). Residues Gly50, Thr51, Gly52, Lys53, Thr54, Leu55, Ser90, Lys225, Leu226, Arg227, Thr229, His231, Thr241, Thr291, Gly292, Thr293, Gly294, Lys295, Thr296, and Leu297 each contribute to the ATP site. Thr54 provides a ligand contact to Mg(2+). Residue Thr296 coordinates Mg(2+). Residue Glu319 participates in Mg(2+) binding. ATP is bound at residue Trp332. Phosphoserine; by autocatalysis is present on Ser432. Thr433 carries the post-translational modification Phosphothreonine; by autocatalysis. The ATP site is built by Arg452, Lys458, Met459, Arg460, Ser462, His464, and Lys466.

The protein belongs to the KaiC family. Homohexamer; hexamerization is dependent on ATP-binding. Core component of the KaiABC complex, at least composed of a KaiC homohexamer, a KaiB dimer and two KaiA dimers. Interacts directly with SasA. Multimerizes, probably forming homohexamers, no interaction with KaiC2 or KaiC3 is seen. Interacts with KaiA. In another study interacts with itself, KaiB1, KaiB3 and KaiC3. Interacts with SasA (hik8). The cofactor is Mg(2+). Post-translationally, phosphorylated on serine and threonine residues by autocatalysis. Has a 4 step phosphorylation cycle; the autokinase acts first on Thr-433, then Ser-432. When Ser-432 is modified KaiC switches to an autophosphatase mode, acting first on phospho-Thr-433 then phospho-Ser-432.

The catalysed reaction is L-seryl-[protein] + ATP = O-phospho-L-seryl-[protein] + ADP + H(+). It carries out the reaction L-threonyl-[protein] + ATP = O-phospho-L-threonyl-[protein] + ADP + H(+). It catalyses the reaction ATP + H2O = ADP + phosphate + H(+). The interaction with KaiA enhances its phosphorylation status, while the interaction with KaiB decreases it. Component of the oscillator and circadian clock in this organism, enhances fitness in a rhythmic environment. Autophosphorylates in the presence of KaiA, no activity is seen in its absence. In terms of biological role, central component of the KaiABC oscillator complex, which constitutes the main circadian regulator in cyanobacteria. Complex composition changes during the circadian cycle to control KaiC phosphorylation. KaiA stimulates KaiC autophosphorylation, while KaiB sequesters KaiA, leading to KaiC autodephosphorylation. Clock output pathways impact the RpaA transcriptional regulator. KaiC enhances the autophosphorylation activity of SasA, which then transfers its phosphate group to RpaA to activate it. KaiB and KaiC together enhance the phospho-RpaA dephosphatase activity of CikA. Its function is as follows. Has a weak, temperature-independent ATPase activity; ATPase activity defines the circadian period. The phosphorylation state of KaiC modulates its ATPase activity and effects KaiB binding. The sequence is that of Circadian clock oscillator protein KaiC 1 from Synechocystis sp. (strain ATCC 27184 / PCC 6803 / Kazusa).